The primary structure comprises 191 residues: Large ribosomal subunit protein bL12cz (191 aa).

The transit peptide at 1–58 (MASTTLSIATTIRSSSYPTLASINHFPSRTTTIEFPSRFGGGSSSTLTHRATHLRPIA) directs the protein to the chloroplast.

The protein belongs to the bacterial ribosomal protein bL12 family.

Its subcellular location is the plastid. It is found in the chloroplast. The polypeptide is Large ribosomal subunit protein bL12cz (RPL12A) (Arabidopsis thaliana (Mouse-ear cress)).